We begin with the raw amino-acid sequence, 93 residues long: Putative regulatory protein Cthe_1316 (93 aa).

Residues R74–E93 form a disordered region. Positions E81 to E93 are enriched in acidic residues.

Belongs to the RemA family.

The polypeptide is Putative regulatory protein Cthe_1316 (Acetivibrio thermocellus (strain ATCC 27405 / DSM 1237 / JCM 9322 / NBRC 103400 / NCIMB 10682 / NRRL B-4536 / VPI 7372) (Clostridium thermocellum)).